Here is a 314-residue protein sequence, read N- to C-terminus: 2-desacetyl-2-hydroxyethyl bacteriochlorophyllide A dehydrogenase (314 aa).

It functions in the pathway porphyrin-containing compound metabolism; bacteriochlorophyll biosynthesis (light-independent). Its function is as follows. This protein catalyzes the penultimate step in bacteriochlorophyll a biosynthesis. The protein is 2-desacetyl-2-hydroxyethyl bacteriochlorophyllide A dehydrogenase (bchC) of Rhodobacter capsulatus (strain ATCC BAA-309 / NBRC 16581 / SB1003).